The following is a 72-amino-acid chain: uncharacterized protein (72 aa).

A compositionally biased stretch (low complexity) spans 1–38; that stretch reads MSIFSSLSSLSTGSLKSSVSSIENGSSSGSFGSNETSG. The segment at 1 to 42 is disordered; sequence MSIFSSLSSLSTGSLKSSVSSIENGSSSGSFGSNETSGWGQH.

This is an uncharacterized protein from Dictyostelium discoideum (Social amoeba).